Reading from the N-terminus, the 344-residue chain is MKTATSYAAFLLSALAALPHASAHGFVSKVVVNGQSYAGNTPGGDTSPSPIRQISTISPVKGAANKDMFCGYDAQVASQVAAADPGSKVTFTWSGGGGQNWPHNTGPLMTYMGACEGTTCDKYTATDAKWFKIDEVGREANGGDWVQQEIMNGGTYTVTLPSNIAPGDYLIRHEIIALHLGMTEGGAEFYPSCTQVRITGNGSGTPNQTVSFPGAYSDTDPGIWDKNVYDPSAPYTFPGPPLSNLVSGDSGTVDGQGGSTSSATLSGGAAPTGTASGSTPAGTSQPSSTTGTGNAGANPSSGKCSLKSRAAPTTSGNLSANYPRHFSRVMKRLLNDFQTTVHQW.

Residues 1–23 form the signal peptide; that stretch reads MKTATSYAAFLLSALAALPHASA. His-24 is a Cu(2+) binding site. The cysteines at positions 70 and 193 are disulfide-linked. Residue His-179 participates in O2 binding. Tyr-190 lines the Cu(2+) pocket. 2 N-linked (GlcNAc...) asparagine glycosylation sites follow: Asn-201 and Asn-207. The segment at 240-321 is disordered; the sequence is PPLSNLVSGD…PTTSGNLSAN (82 aa). The segment covering 259-292 has biased composition (low complexity); it reads STSSATLSGGAAPTGTASGSTPAGTSQPSSTTGT. Over residues 311–320 the composition is skewed to polar residues; the sequence is APTTSGNLSA. N-linked (GlcNAc...) asparagine glycosylation is present at Asn-317.

It belongs to the polysaccharide monooxygenase AA9 family. Requires Cu(2+) as cofactor.

The protein resides in the secreted. The enzyme catalyses [(1-&gt;4)-beta-D-glucosyl]n+m + reduced acceptor + O2 = 4-dehydro-beta-D-glucosyl-[(1-&gt;4)-beta-D-glucosyl]n-1 + [(1-&gt;4)-beta-D-glucosyl]m + acceptor + H2O.. Its function is as follows. Lytic polysaccharide monooxygenase (LPMO) that depolymerizes crystalline and amorphous polysaccharides via the oxidation of scissile alpha- or beta-(1-4)-glycosidic bonds, yielding C1 or C4 oxidation products. Catalysis by LPMOs requires the reduction of the active-site copper from Cu(II) to Cu(I) by a reducing agent and H(2)O(2) or O(2) as a cosubstrate. This Gloeophyllum trabeum (strain ATCC 11539 / FP-39264 / Madison 617) (Brown rot fungus) protein is AA9 family lytic polysaccharide monooxygenase D.